A 163-amino-acid chain; its full sequence is Large ribosomal subunit protein uL10 (163 aa).

The protein belongs to the universal ribosomal protein uL10 family. As to quaternary structure, part of the ribosomal stalk of the 50S ribosomal subunit. The N-terminus interacts with L11 and the large rRNA to form the base of the stalk. The C-terminus forms an elongated spine to which L12 dimers bind in a sequential fashion forming a multimeric L10(L12)X complex.

Its function is as follows. Forms part of the ribosomal stalk, playing a central role in the interaction of the ribosome with GTP-bound translation factors. The polypeptide is Large ribosomal subunit protein uL10 (Haemophilus ducreyi (strain 35000HP / ATCC 700724)).